Reading from the N-terminus, the 416-residue chain is Gamma-glutamyl phosphate reductase (416 aa).

It belongs to the gamma-glutamyl phosphate reductase family.

Its subcellular location is the cytoplasm. It carries out the reaction L-glutamate 5-semialdehyde + phosphate + NADP(+) = L-glutamyl 5-phosphate + NADPH + H(+). Its pathway is amino-acid biosynthesis; L-proline biosynthesis; L-glutamate 5-semialdehyde from L-glutamate: step 2/2. Functionally, catalyzes the NADPH-dependent reduction of L-glutamate 5-phosphate into L-glutamate 5-semialdehyde and phosphate. The product spontaneously undergoes cyclization to form 1-pyrroline-5-carboxylate. This Vibrio cholerae serotype O1 (strain ATCC 39541 / Classical Ogawa 395 / O395) protein is Gamma-glutamyl phosphate reductase.